The primary structure comprises 567 residues: Berberine bridge enzyme-like D-1 (567 aa).

The N-terminal stretch at 1–33 is a signal peptide; it reads MKRNISMFLQLLLIILMMISFLFTSLLVPSVSA. A disulfide bond links C42 and C103. An N-linked (GlcNAc...) asparagine glycan is attached at N50. The 177-residue stretch at 81–257 folds into the FAD-binding PCMH-type domain; it reads SKPKPTVIIV…YAWKIRLLKV (177 aa). The residue at position 118 (H118) is a Pros-8alpha-FAD histidine. N364 and N378 each carry an N-linked (GlcNAc...) asparagine glycan.

It belongs to the oxygen-dependent FAD-linked oxidoreductase family. FAD serves as cofactor. Mostly expressed in roots at low levels.

It is found in the vacuole. It functions in the pathway alkaloid biosynthesis; nicotine biosynthesis. In terms of biological role, involved in the biosynthesis of pyridine alkaloid natural products, leading mainly to the production of anabasine, anatabine, nicotine and nornicotine, effective deterrents against herbivores with antiparasitic and pesticide properties (neurotoxins); nornicotine serves as the precursor in the synthesis of the carcinogen compound N'-nitrosonornicotine (NNN). Catalyzes a late oxidation step subsequent to the pyridine ring condensation reaction in the biosynthesis of alkaloids. In Nicotiana tabacum (Common tobacco), this protein is Berberine bridge enzyme-like D-1.